The sequence spans 474 residues: ATP synthase subunit beta (474 aa).

Position 155-162 (155-162 (GGAGVGKT)) interacts with ATP.

Belongs to the ATPase alpha/beta chains family. In terms of assembly, F-type ATPases have 2 components, CF(1) - the catalytic core - and CF(0) - the membrane proton channel. CF(1) has five subunits: alpha(3), beta(3), gamma(1), delta(1), epsilon(1). CF(0) has three main subunits: a(1), b(2) and c(9-12). The alpha and beta chains form an alternating ring which encloses part of the gamma chain. CF(1) is attached to CF(0) by a central stalk formed by the gamma and epsilon chains, while a peripheral stalk is formed by the delta and b chains.

The protein resides in the cell inner membrane. The enzyme catalyses ATP + H2O + 4 H(+)(in) = ADP + phosphate + 5 H(+)(out). In terms of biological role, produces ATP from ADP in the presence of a proton gradient across the membrane. The catalytic sites are hosted primarily by the beta subunits. This is ATP synthase subunit beta from Sorangium cellulosum (strain So ce56) (Polyangium cellulosum (strain So ce56)).